Consider the following 564-residue polypeptide: MSESFKVCFCCSRSFKEKTRQPPVSIKRLFEAYSRNGKMSFDELLRFVSEVQGERHAGLDYVQDIFHSVKHHNVFHHHGLVHLNAFYRYLFSDTNSPLPMSGQVHHDMKAPLSHYFVYTGHNSYLTGNQVNSRSSVEPIVQALRKGVKVIELDLWPNPSGNAAEVRHGRTLTSHEDLQKCLTAIKDNAFHVSDYPVIITLEDHLPPKLQAQVAKMLTKTYRGMLFRRVSESFKHFPSPEELKGKILISTKPPKEYLESKTVHTTRTPTVKETSWNRVANKILEEYKDMESEAVGYRDLIAIHAANCKDPSKDCLSDDPEKPIRVSMDEQWLDTMVRTRGTDLVRFTQRNLVRIYPKGTRVDSSNYDPHVGWTHGAQMVAFNMQGHGKQLWIMQGMFRGNGGCGYVKKPRILLDEHTLFDPCKRFPIKTTLKVKIYTGEGWDLDFHHTHFDQYSPPDFFVKIGIAGVPRDTVSYRTETAVDQWFPIWGNDEFLFQLSVPELALLWFKVQDYDNDTQNDFAGQTCLPLPELKSGVRAVRLHDRTGKAYKNTRLLVSFALDPPYTFR.

In terms of domain architecture, EF-hand spans Thr-19–Glu-54. The PI-PLC X-box domain maps to His-106–Lys-250. Catalysis depends on residues His-121 and His-167. Residues Arg-296 to Leu-412 enclose the PI-PLC Y-box domain. In terms of domain architecture, C2 spans Lys-406–His-539. Positions 450, 456, 509, 511, and 517 each coordinate Ca(2+).

It depends on Ca(2+) as a cofactor. In terms of tissue distribution, expressed in leaves, roots and siliques, but not in flowers.

It localises to the cell membrane. It carries out the reaction a 1,2-diacyl-sn-glycero-3-phospho-(1D-myo-inositol-4,5-bisphosphate) + H2O = 1D-myo-inositol 1,4,5-trisphosphate + a 1,2-diacyl-sn-glycerol + H(+). The production of the second messenger molecules diacylglycerol (DAG) and inositol 1,4,5-trisphosphate (IP3) is mediated by activated phosphatidylinositol-specific phospholipase C enzymes. The polypeptide is Phosphoinositide phospholipase C 3 (PLC3) (Arabidopsis thaliana (Mouse-ear cress)).